Here is a 574-residue protein sequence, read N- to C-terminus: 5'-nucleotidase (574 aa).

The N-terminal stretch at 1–26 (MNPGAARTPALRILALGALLWPAARP) is a signal peptide. Zn(2+) contacts are provided by aspartate 36 and histidine 38. Cysteine 51 and cysteine 57 are oxidised to a cystine. N-linked (GlcNAc...) asparagine glycosylation is present at asparagine 53. Residues aspartate 85, asparagine 117, histidine 220, and histidine 243 each coordinate Zn(2+). Residues asparagine 311 and asparagine 333 are each glycosylated (N-linked (GlcNAc...) asparagine). 2 disulfides stabilise this stretch: cysteine 353-cysteine 358 and cysteine 365-cysteine 387. Arginine 354 contributes to the AMP binding site. Arginine 354 contributes to the IMP binding site. The AMP site is built by asparagine 390 and arginine 395. Residues asparagine 390 and arginine 395 each coordinate IMP. The N-linked (GlcNAc...) asparagine glycan is linked to asparagine 403. AMP is bound at residue phenylalanine 417. Residue phenylalanine 417 coordinates IMP. A disulfide bridge connects residues cysteine 476 and cysteine 479. The AMP site is built by phenylalanine 500 and aspartate 506. Residues phenylalanine 500 and aspartate 506 each coordinate IMP. Serine 549 is lipidated: GPI-anchor amidated serine. Residues 550-574 (AGSHCCGSFSLIFLSVLAVIIILYQ) constitute a propeptide, removed in mature form.

Belongs to the 5'-nucleotidase family. Homodimer. Requires Zn(2+) as cofactor.

It localises to the cell membrane. It carries out the reaction a ribonucleoside 5'-phosphate + H2O = a ribonucleoside + phosphate. The catalysed reaction is a 2'-deoxyribonucleoside 5'-phosphate + H2O = a 2'-deoxyribonucleoside + phosphate. It catalyses the reaction dTMP + H2O = thymidine + phosphate. The enzyme catalyses CMP + H2O = cytidine + phosphate. It carries out the reaction IMP + H2O = inosine + phosphate. The catalysed reaction is AMP + H2O = adenosine + phosphate. It catalyses the reaction GMP + H2O = guanosine + phosphate. The enzyme catalyses UMP + H2O = uridine + phosphate. It carries out the reaction dAMP + H2O = 2'-deoxyadenosine + phosphate. The catalysed reaction is dCMP + H2O = 2'-deoxycytidine + phosphate. Catalyzes the hydrolysis of nucleotide monophosphates, releasing inorganic phosphate and the corresponding nucleoside, with AMP being the preferred substrate. Shows a preference for ribonucleotide monophosphates over their equivalent deoxyribose forms. Other substrates include IMP, UMP, GMP, CMP, dAMP, dCMP, dTMP, NAD and NMN. This chain is 5'-nucleotidase (NT5E), found in Bos taurus (Bovine).